The following is a 111-amino-acid chain: Guanylate cyclase activator 2B (111 aa).

An N-terminal signal peptide occupies residues 1–26 (MGSRTLLGHLSVLAVVLLLLLQGTQS). Residues 27–96 (VDIKYQGYQV…SILQALRTMD (70 aa)) constitute a propeptide that is removed on maturation. Intrachain disulfides connect C67-C80, C100-C108, and C103-C111.

Belongs to the guanylin family.

The protein resides in the secreted. In terms of biological role, endogenous activator of intestinal guanylate cyclase. It stimulates this enzyme through the same receptor binding region as the heat-stable enterotoxins. May be a potent physiological regulator of intestinal fluid and electrolyte transport. May be an autocrine/paracrine regulator of intestinal salt and water transport. The sequence is that of Guanylate cyclase activator 2B (GUCA2B) from Cavia porcellus (Guinea pig).